We begin with the raw amino-acid sequence, 384 residues long: S-adenosylmethionine synthase (384 aa).

Histidine 15 provides a ligand contact to ATP. Aspartate 17 contributes to the Mg(2+) binding site. Glutamate 43 provides a ligand contact to K(+). 2 residues coordinate L-methionine: glutamate 56 and glutamine 99. The segment at 99-109 (QSPDINQGVDR) is flexible loop. ATP is bound by residues 164–166 (DAK), 230–231 (RF), aspartate 239, 245–246 (RK), alanine 262, and lysine 266. Residue aspartate 239 participates in L-methionine binding. Lysine 270 lines the L-methionine pocket.

The protein belongs to the AdoMet synthase family. Homotetramer; dimer of dimers. It depends on Mg(2+) as a cofactor. K(+) serves as cofactor.

Its subcellular location is the cytoplasm. It carries out the reaction L-methionine + ATP + H2O = S-adenosyl-L-methionine + phosphate + diphosphate. It functions in the pathway amino-acid biosynthesis; S-adenosyl-L-methionine biosynthesis; S-adenosyl-L-methionine from L-methionine: step 1/1. Functionally, catalyzes the formation of S-adenosylmethionine (AdoMet) from methionine and ATP. The overall synthetic reaction is composed of two sequential steps, AdoMet formation and the subsequent tripolyphosphate hydrolysis which occurs prior to release of AdoMet from the enzyme. In Klebsiella pneumoniae (strain 342), this protein is S-adenosylmethionine synthase.